The following is a 277-amino-acid chain: Diaminopimelate epimerase (277 aa).

2 residues coordinate substrate: Asn-11 and Asn-62. Cys-71 serves as the catalytic Proton donor. Substrate-binding positions include 72–73 (GN), Asn-160, Asn-193, and 211–212 (ER). Cys-220 serves as the catalytic Proton acceptor. 221-222 (GT) lines the substrate pocket.

Belongs to the diaminopimelate epimerase family. As to quaternary structure, homodimer.

It is found in the cytoplasm. It carries out the reaction (2S,6S)-2,6-diaminopimelate = meso-2,6-diaminopimelate. Its pathway is amino-acid biosynthesis; L-lysine biosynthesis via DAP pathway; DL-2,6-diaminopimelate from LL-2,6-diaminopimelate: step 1/1. Catalyzes the stereoinversion of LL-2,6-diaminopimelate (L,L-DAP) to meso-diaminopimelate (meso-DAP), a precursor of L-lysine. The polypeptide is Diaminopimelate epimerase (Methanococcus maripaludis (strain C6 / ATCC BAA-1332)).